Here is a 698-residue protein sequence, read N- to C-terminus: Polyphosphate kinase (698 aa).

Asn-63 is a binding site for ATP. Mg(2+)-binding residues include Arg-390 and Arg-420. The active-site Phosphohistidine intermediate is the His-450. ATP is bound by residues Tyr-483, Arg-579, and His-607.

It belongs to the polyphosphate kinase 1 (PPK1) family. Requires Mg(2+) as cofactor. Post-translationally, an intermediate of this reaction is the autophosphorylated ppk in which a phosphate is covalently linked to a histidine residue through a N-P bond.

The catalysed reaction is [phosphate](n) + ATP = [phosphate](n+1) + ADP. Functionally, catalyzes the reversible transfer of the terminal phosphate of ATP to form a long-chain polyphosphate (polyP). The sequence is that of Polyphosphate kinase from Xylella fastidiosa (strain Temecula1 / ATCC 700964).